A 750-amino-acid chain; its full sequence is Protein psiO (750 aa).

Residues 1–22 (MKEKIKLSLLILTSIILAVANS) form the signal peptide. Over 23–688 (QTQPKTLAMT…GCNTAAVVST (666 aa)) the chain is Extracellular. A glycan (N-linked (GlcNAc...) asparagine) is linked at asparagine 129. Positions 140–286 (QEYFPINGKG…DDYCGVCNGD (147 aa)) constitute a PA14 domain. 5 N-linked (GlcNAc...) asparagine glycosylation sites follow: asparagine 447, asparagine 506, asparagine 554, asparagine 571, and asparagine 659. The chain crosses the membrane as a helical span at residues 689–709 (AVIAGVTVAAVVGLGIFLYGG). Residues 710-750 (KKGYDYYQDNKSKGMTGANSNPLYKESGNAGQNPLYNDNNL) lie on the Cytoplasmic side of the membrane. Residues 727-750 (ANSNPLYKESGNAGQNPLYNDNNL) are disordered. Residues 738–750 (NAGQNPLYNDNNL) are compositionally biased toward polar residues.

It belongs to the prespore-cell-inducing factor family.

It localises to the membrane. The sequence is that of Protein psiO (psiO) from Dictyostelium discoideum (Social amoeba).